A 342-amino-acid chain; its full sequence is MSAFTPASEVILRHSDEFTQRRVLFAGDLQDDLPAQLETALSRVHTQQYHHWQILSRVLGENAHYGLFASAETLADCDTLVYYWPKNKPEAQYQLQNLLALLPVGSDIFVVGENRSGVRSAEQMVADWAKLEKIDSARRCGLYHGRLDSRPTFDADTFWDEYPLGELTVKTLPGVFSRDGLDIGSQLLLSTLKPHMKGKVLDVGCGAGVLSAMLASFSPKVRLTLTDVNAAAIASSKATLAANQLEGDVFASNVYSDISGRFDMIISNPPFHDGVQTSLDAAQTLIRGAVSHLNTGGELRIVANAFLPYPQVLDETFGSHEVLLQNGRFKVYRAVKSRAAKK.

Belongs to the methyltransferase superfamily. RsmC family. Monomer.

It localises to the cytoplasm. The enzyme catalyses guanosine(1207) in 16S rRNA + S-adenosyl-L-methionine = N(2)-methylguanosine(1207) in 16S rRNA + S-adenosyl-L-homocysteine + H(+). Its function is as follows. Specifically methylates the guanine in position 1207 of 16S rRNA in the 30S particle. The sequence is that of Ribosomal RNA small subunit methyltransferase C from Erwinia tasmaniensis (strain DSM 17950 / CFBP 7177 / CIP 109463 / NCPPB 4357 / Et1/99).